Consider the following 446-residue polypeptide: Histidine--tRNA ligase (446 aa).

The protein belongs to the class-II aminoacyl-tRNA synthetase family. Homodimer.

It is found in the cytoplasm. The enzyme catalyses tRNA(His) + L-histidine + ATP = L-histidyl-tRNA(His) + AMP + diphosphate + H(+). This Burkholderia cenocepacia (strain HI2424) protein is Histidine--tRNA ligase.